The chain runs to 218 residues: Glutathione S-transferase Mu 2 (218 aa).

In terms of domain architecture, GST N-terminal spans 2–88 (PMTLGYWNIR…YIARKHNLCG (87 aa)). 7–8 (YW) serves as a coordination point for glutathione. 2 positions are modified to phosphoserine: Ser27 and Ser44. Residues 43 to 46 (RSQW), Lys50, 59 to 60 (NL), and 72 to 73 (QS) contribute to the glutathione site. The region spanning 90–208 (SEKEQIREDI…KSSRFLPRPV (119 aa)) is the GST C-terminal domain. Tyr116 lines the substrate pocket.

The protein belongs to the GST superfamily. Mu family. In terms of assembly, homodimer. As to expression, muscle.

It localises to the cytoplasm. The enzyme catalyses RX + glutathione = an S-substituted glutathione + a halide anion + H(+). The catalysed reaction is 11(S)-hydroxy-14(S),15(S)-epoxy-(5Z,8Z,12E)-eicosatrienoate + glutathione = (11S,15S)-dihydroxy-14(R)-S-glutathionyl-(5Z,8Z,12E)-eicosatrienoate. Functionally, conjugation of reduced glutathione to a wide number of exogenous and endogenous hydrophobic electrophiles. Participates in the formation of novel hepoxilin regioisomers. This chain is Glutathione S-transferase Mu 2, found in Homo sapiens (Human).